The primary structure comprises 957 residues: Protein translocase subunit SecA (957 aa).

Residues glutamine 86, 104 to 108 (GEGKT), and aspartate 494 contribute to the ATP site. The span at 929 to 947 (SRPAPAPTAAASPDPSSAS) shows a compositional bias: low complexity. Residues 929 to 957 (SRPAPAPTAAASPDPSSASGVVEADFTEE) are disordered.

It belongs to the SecA family. In terms of assembly, monomer and homodimer. Part of the essential Sec protein translocation apparatus which comprises SecA, SecYEG and auxiliary proteins SecDF. Other proteins may also be involved.

Its subcellular location is the cell inner membrane. The protein resides in the cellular thylakoid membrane. It localises to the cytoplasm. It catalyses the reaction ATP + H2O + cellular proteinSide 1 = ADP + phosphate + cellular proteinSide 2.. Part of the Sec protein translocase complex. Interacts with the SecYEG preprotein conducting channel. Has a central role in coupling the hydrolysis of ATP to the transfer of proteins into and across the cell membrane, serving as an ATP-driven molecular motor driving the stepwise translocation of polypeptide chains across the membrane. Functionally, probably participates in protein translocation into and across both the cytoplasmic and thylakoid membranes in cyanobacterial cells. This Synechococcus sp. (strain JA-2-3B'a(2-13)) (Cyanobacteria bacterium Yellowstone B-Prime) protein is Protein translocase subunit SecA.